The following is a 105-amino-acid chain: Large ribosomal subunit protein uL24 (105 aa).

Positions 67-105 (HISNLNPVDPKTGKATRIGRRKSSEGTLVRYSKKSGEEI) are disordered.

This sequence belongs to the universal ribosomal protein uL24 family. As to quaternary structure, part of the 50S ribosomal subunit.

One of two assembly initiator proteins, it binds directly to the 5'-end of the 23S rRNA, where it nucleates assembly of the 50S subunit. Its function is as follows. One of the proteins that surrounds the polypeptide exit tunnel on the outside of the subunit. This is Large ribosomal subunit protein uL24 from Bacteroides thetaiotaomicron (strain ATCC 29148 / DSM 2079 / JCM 5827 / CCUG 10774 / NCTC 10582 / VPI-5482 / E50).